Reading from the N-terminus, the 209-residue chain is Pyridoxine/pyridoxamine 5'-phosphate oxidase (209 aa).

Residues 7-10 and Lys64 contribute to the substrate site; that span reads REDY. Residues 59-64, 74-75, Arg80, and Lys81 contribute to the FMN site; these read RIVLLK and FT. Substrate is bound by residues Tyr121, Arg125, and Ser129. FMN contacts are provided by residues 138 to 139 and Trp182; that span reads QS. 188–190 lines the substrate pocket; that stretch reads RLH. Arg192 contacts FMN.

Belongs to the pyridoxamine 5'-phosphate oxidase family. Homodimer. Requires FMN as cofactor.

It catalyses the reaction pyridoxamine 5'-phosphate + O2 + H2O = pyridoxal 5'-phosphate + H2O2 + NH4(+). The enzyme catalyses pyridoxine 5'-phosphate + O2 = pyridoxal 5'-phosphate + H2O2. Its pathway is cofactor metabolism; pyridoxal 5'-phosphate salvage; pyridoxal 5'-phosphate from pyridoxamine 5'-phosphate: step 1/1. The protein operates within cofactor metabolism; pyridoxal 5'-phosphate salvage; pyridoxal 5'-phosphate from pyridoxine 5'-phosphate: step 1/1. Catalyzes the oxidation of either pyridoxine 5'-phosphate (PNP) or pyridoxamine 5'-phosphate (PMP) into pyridoxal 5'-phosphate (PLP). The chain is Pyridoxine/pyridoxamine 5'-phosphate oxidase from Actinobacillus pleuropneumoniae serotype 5b (strain L20).